A 213-amino-acid polypeptide reads, in one-letter code: Ribosomal RNA small subunit methyltransferase G (213 aa).

S-adenosyl-L-methionine is bound by residues Gly-75, Phe-80, 128–129, and Arg-144; that span reads IE.

The protein belongs to the methyltransferase superfamily. RNA methyltransferase RsmG family.

The protein localises to the cytoplasm. The enzyme catalyses guanosine(527) in 16S rRNA + S-adenosyl-L-methionine = N(7)-methylguanosine(527) in 16S rRNA + S-adenosyl-L-homocysteine. Its function is as follows. Specifically methylates the N7 position of guanine in position 527 of 16S rRNA. This chain is Ribosomal RNA small subunit methyltransferase G, found in Brucella ovis (strain ATCC 25840 / 63/290 / NCTC 10512).